The sequence spans 380 residues: MGTKGKVIKCKAAIAWEAGKPLCIEEVEVAPPKAHEVRIQIIATSLCHTDATVIDSKFEGLAFPVIVGHEAAGIVESIGPGVTNVKPGDKVIPLYAPLCRKCKFCLSPLTNLCGKISNLKSPASDQQLMEDKTSRFTCKGKPVYHFFGTSTFSQYTVVSDINLAKIDDDANLERVCLLGCGFSTGYGAAINNAKVTPGSTCAVFGLGGVGLSAVMGCKAAGASRIIGIDINSEKFVKAKALGATDCLNPRDLHKPIQEVIIELTKGGVDFALDCAGGSETMKAALDCTTAGWGSCTFIGVAAGSKGLTIFPEELIIGRTINGTFFGGWKSVDSIPKLVTDYKNKKFNLDALVTHTLPFDKISEAFDLMNQGKSVRTILIF.

Residue Cys-47 participates in Zn(2+) binding. Residue 48 to 49 (HT) participates in NAD(+) binding. Zn(2+)-binding residues include His-69, Cys-99, Cys-102, Cys-105, and Cys-113. The residue at position 121 (Ser-121) is a Phosphoserine. Residue Cys-180 coordinates Zn(2+). NAD(+)-binding positions include 205–210 (GLGGVG), Asp-229, and Lys-234. Ser-278 bears the Phosphoserine mark. NAD(+) contacts are provided by residues 298–300 (IGV), 323–325 (TFF), and Arg-375.

Belongs to the zinc-containing alcohol dehydrogenase family. Class-II subfamily. As to quaternary structure, homodimer. Zn(2+) serves as cofactor.

Its subcellular location is the cytoplasm. The catalysed reaction is all-trans-retinol + NAD(+) = all-trans-retinal + NADH + H(+). It carries out the reaction 9-cis-retinol + NAD(+) = 9-cis-retinal + NADH + H(+). It catalyses the reaction 20-oxo-(5Z,8Z,11Z,14Z)-eicosatetraenoate + NAD(+) + H2O = (5Z,8Z,11Z,14Z)-eicosatetraenedioate + NADH + 2 H(+). The enzyme catalyses 20-hydroxy-(5Z,8Z,11Z,14Z)-eicosatetraenoate + NAD(+) = 20-oxo-(5Z,8Z,11Z,14Z)-eicosatetraenoate + NADH + H(+). The catalysed reaction is 1,4-benzoquinone + NADH + H(+) = hydroquinone + NAD(+). Oxydation of 20-HETE is inhibited by low concentrations of N-heptylformamide. Oxydation of 20-HETE is a decreased by 55-65% by either all-trans-retinol or all-trans-retinoic acid. Strongly inhibited by omega-hydroxy fatty acids. Its function is as follows. Catalyzes the NAD-dependent oxidation of either all-trans-retinol or 9-cis-retinol. Also oxidizes long chain omega-hydroxy fatty acids, such as 20-HETE, producing both the intermediate aldehyde, 20-oxoarachidonate and the end product, a dicarboxylic acid, (5Z,8Z,11Z,14Z)-eicosatetraenedioate. Also catalyzes the reduction of benzoquinones. This Homo sapiens (Human) protein is All-trans-retinol dehydrogenase [NAD(+)] ADH4.